We begin with the raw amino-acid sequence, 777 residues long: Penicillin-binding protein 1B (777 aa).

Residues 1 to 30 (MTRKSSNRSRGRKARSGKSASSSKLQIWLG) lie on the Cytoplasmic side of the membrane. The chain crosses the membrane as a helical; Signal-anchor for type II membrane protein span at residues 31–52 (RIWSIGWKLALTLAAVLVFIGI). Residues 53–777 (YLDSMIKQRF…TEWIKKLFEW (725 aa)) are Periplasmic-facing. The interval 162 to 334 (LRLEPKLMGM…SYYNPMRYAE (173 aa)) is transglycosylase. E200 (proton donor; for transglycosylase activity) is an active-site residue. Residues 415 to 709 (SKLEQAIHDQ…ASGALRVYAQ (295 aa)) are transpeptidase. S476 serves as the catalytic Acyl-ester intermediate; for transpeptidase activity.

In the N-terminal section; belongs to the glycosyltransferase 51 family. This sequence in the C-terminal section; belongs to the transpeptidase family.

It localises to the cell inner membrane. It catalyses the reaction [GlcNAc-(1-&gt;4)-Mur2Ac(oyl-L-Ala-gamma-D-Glu-L-Lys-D-Ala-D-Ala)](n)-di-trans,octa-cis-undecaprenyl diphosphate + beta-D-GlcNAc-(1-&gt;4)-Mur2Ac(oyl-L-Ala-gamma-D-Glu-L-Lys-D-Ala-D-Ala)-di-trans,octa-cis-undecaprenyl diphosphate = [GlcNAc-(1-&gt;4)-Mur2Ac(oyl-L-Ala-gamma-D-Glu-L-Lys-D-Ala-D-Ala)](n+1)-di-trans,octa-cis-undecaprenyl diphosphate + di-trans,octa-cis-undecaprenyl diphosphate + H(+). It carries out the reaction Preferential cleavage: (Ac)2-L-Lys-D-Ala-|-D-Ala. Also transpeptidation of peptidyl-alanyl moieties that are N-acyl substituents of D-alanine.. It functions in the pathway cell wall biogenesis; peptidoglycan biosynthesis. Functionally, cell wall formation. Synthesis of cross-linked peptidoglycan from the lipid intermediates. The enzyme has a penicillin-insensitive transglycosylase N-terminal domain (formation of linear glycan strands) and a penicillin-sensitive transpeptidase C-terminal domain (cross-linking of the peptide subunits). This chain is Penicillin-binding protein 1B (mrcB), found in Vibrio cholerae serotype O1 (strain ATCC 39315 / El Tor Inaba N16961).